We begin with the raw amino-acid sequence, 303 residues long: Phytochrome-associated serine/threonine-protein phosphatase (303 aa).

4 residues coordinate Zn(2+): aspartate 50, histidine 52, aspartate 78, and asparagine 110. The active-site Proton donor is the histidine 111. The Zn(2+) site is built by histidine 160 and histidine 234.

It belongs to the PPP phosphatase family. PP-6 (PP-V) subfamily. In terms of assembly, interacts with PHYA and PHYB, mostly when they are phosphorylated and in Pfr forms. The cofactor is Zn(2+). As to expression, mostly expressed in flowers and stems.

It localises to the cytoplasm. It catalyses the reaction O-phospho-L-seryl-[protein] + H2O = L-seryl-[protein] + phosphate. It carries out the reaction O-phospho-L-threonyl-[protein] + H2O = L-threonyl-[protein] + phosphate. Its function is as follows. Catalytic subunit of protein phosphatase 6 (PP6). Dephosphorylates phosphorylated phytochromes, with a preference toward Pfr forms. Plays a major role in the photoperiodic control of flowering time in long days by modulating phytochrome signals in flowering time control. The protein is Phytochrome-associated serine/threonine-protein phosphatase of Pisum sativum (Garden pea).